Reading from the N-terminus, the 625-residue chain is Tyrosine-protein kinase ITK/TSK (625 aa).

Residues 4-117 form the PH domain; it reads FILLEEQLIK…WVLTLKEETR (114 aa). The Btk-type zinc-finger motif lies at 119-155; the sequence is NNSLVSKYHPNFWMDGRWRCCSQLEKPAVGCAPYDPS. His-127, Cys-138, Cys-139, and Cys-149 together coordinate Zn(2+). Positions 153–174 are disordered; that stretch reads DPSKNASKKPLPPTPEDNRRSF. The SH3 domain maps to 177–237; sequence PEETLVIALY…PSSYLVEKSP (61 aa). Position 186 is a phosphotyrosine; by autocatalysis (Tyr-186). The region spanning 245 to 343 is the SH2 domain; that stretch reads WYNKSISRDK…GLVTRLRYPV (99 aa). One can recognise a Protein kinase domain in the interval 368 to 620; sequence LTFVQEIGSG…SQLLSQLAEI (253 aa). ATP-binding positions include 374-382 and Lys-396; that span reads IGSGQFGLV. Residue Asp-487 is the Proton acceptor of the active site. Residue Tyr-517 is modified to Phosphotyrosine; by LCK. Ser-570 carries the post-translational modification Phosphoserine.

The protein belongs to the protein kinase superfamily. Tyr protein kinase family. TEC subfamily. Homooligomerizes; this association negatively regulates kinase activity. Interacts with PPIA/CYPA; this interaction regulates TCR signal strength via a proline-directed conformational switch in ITK. Interacts with THEMIS. Interacts with FASLG. Interacts with VAV1; this interaction is important for VAV1 localization and TCR-induced actin polarization. Interacts with TBX21. Requires Zn(2+) as cofactor. Phosphorylated at Tyr-517 in the activation loop of the kinase domain by LCK. Subsequent autophosphorylation at Tyr-186 leads to the kinase activation. The autophosphorylated Tyr-186 lies within the substrate binding sequence of the SH3 domain. Post-translationally, ubiquitinated. As to expression, is detected in the thymus, lymph node and very faintly in the spleen, but is not detected in the liver, lung, kidney, heart, brain, intestine or testis. Expressed in T-lymphocytes and mast cells. It may also be expressed in natural killer cells.

The protein resides in the cytoplasm. It is found in the nucleus. It carries out the reaction L-tyrosyl-[protein] + ATP = O-phospho-L-tyrosyl-[protein] + ADP + H(+). Its function is as follows. Tyrosine kinase that plays an essential role in regulation of the adaptive immune response. Regulates the development, function and differentiation of conventional T-cells and nonconventional NKT-cells. When antigen presenting cells (APC) activate T-cell receptor (TCR), a series of phosphorylation lead to the recruitment of ITK to the cell membrane, in the vicinity of the stimulated TCR receptor, where it is phosphorylated by LCK. Phosphorylation leads to ITK autophosphorylation and full activation. Once activated, phosphorylates PLCG1, leading to the activation of this lipase and subsequent cleavage of its substrates. In turn, the endoplasmic reticulum releases calcium in the cytoplasm and the nuclear activator of activated T-cells (NFAT) translocates into the nucleus to perform its transcriptional duty. Phosphorylates 2 essential adapter proteins: the linker for activation of T-cells/LAT protein and LCP2. Then, a large number of signaling molecules such as VAV1 are recruited and ultimately lead to lymphokine production, T-cell proliferation and differentiation. Required for TCR-mediated calcium response in gamma-delta T-cells, may also be involved in the modulation of the transcriptomic signature in the Vgamma2-positive subset of immature gamma-delta T-cells. Phosphorylates TBX21 at 'Tyr-525' and mediates its interaction with GATA3. In Mus musculus (Mouse), this protein is Tyrosine-protein kinase ITK/TSK (Itk).